A 121-amino-acid polypeptide reads, in one-letter code: Protein TusC (121 aa).

This sequence belongs to the DsrF/TusC family. Heterohexamer, formed by a dimer of trimers. The hexameric TusBCD complex contains 2 copies each of TusB, TusC and TusD. The TusBCD complex interacts with TusE.

The protein resides in the cytoplasm. In terms of biological role, part of a sulfur-relay system required for 2-thiolation of 5-methylaminomethyl-2-thiouridine (mnm(5)s(2)U) at tRNA wobble positions. The polypeptide is Protein TusC (Yersinia enterocolitica serotype O:8 / biotype 1B (strain NCTC 13174 / 8081)).